The following is a 239-amino-acid chain: Norbelladine 4'-O-methyltransferase 4 (239 aa).

S-adenosyl-L-methionine contacts are provided by residues Val-55, Glu-77, 79–80 (GV), Ser-85, Asp-103, and Ala-132. Residue Asp-155 participates in a divalent metal cation binding. Position 157 (Asp-157) interacts with S-adenosyl-L-methionine. A divalent metal cation is bound by residues Asp-181 and Asn-182.

This sequence belongs to the class I-like SAM-binding methyltransferase superfamily. Cation-dependent O-methyltransferase family. The cofactor is Mg(2+).

It carries out the reaction norbelladine + S-adenosyl-L-methionine = 4'-O-methylnorbelladine + S-adenosyl-L-homocysteine + H(+). It participates in alkaloid biosynthesis. Its function is as follows. 4'-O-methyltransferase converting norbelladine to 4'-O-methylnorbelladine. 4'-O-methylnorbelladine is a precursor to all Amaryllidaceae alkaloids such as galanthamine, lycorine and haemanthamine, and including haemanthamine- and crinamine-type alkaloids, promising anticancer agents. This is Norbelladine 4'-O-methyltransferase 4 from Narcissus aff. pseudonarcissus MK-2014 (Daffodil).